The primary structure comprises 306 residues: MPETGQESSNPPAKESPFSIKSLLTCEPSRAARPPKALFTPIKGALDGAAFAFSPLTDFTFPRLEIPTQRFALPAHYLERSPGWWYSYTLAHGGHTPRTEVPDKSLLLGPTSPVSGGERDSPDPIHPLKTELGAKESESKSPEEIILEESDPEEGKKDDSGEDWKKREDSPDKKPCRKKKTRTVFSRSQVFQLESTFDMKRYLSSSERAGLAASLHLTETQVKIWFQNRRNKWKRQLAAELEAANLSHAAAQRIVRVPILYHENSSSAESASSAANVPVSQPLLTFPHPVYYSHPVVTSVPLLRPV.

Residues 95–181 (HTPRTEVPDK…DKKPCRKKKT (87 aa)) are disordered. 2 stretches are compositionally biased toward basic and acidic residues: residues 117–143 (GERD…KSPE) and 153–174 (EEGK…PDKK). The segment at residues 178–237 (KKKTRTVFSRSQVFQLESTFDMKRYLSSSERAGLAASLHLTETQVKIWFQNRRNKWKRQL) is a DNA-binding region (homeobox).

The protein belongs to the HMX homeobox family.

It localises to the nucleus. In terms of biological role, transcription factor involved in specification of neuronal cell types and which is required for inner ear and hypothalamus development. Binds to the 5'-CAAGTG-3' core sequence. May act as a stage-specific inhibitor of anf1 in the anterior neural plate during the development. The sequence is that of Homeobox protein HMX3 (hmx3) from Xenopus laevis (African clawed frog).